Here is a 79-residue protein sequence, read N- to C-terminus: Exodeoxyribonuclease 7 small subunit (79 aa).

It belongs to the XseB family. In terms of assembly, heterooligomer composed of large and small subunits.

The protein localises to the cytoplasm. The catalysed reaction is Exonucleolytic cleavage in either 5'- to 3'- or 3'- to 5'-direction to yield nucleoside 5'-phosphates.. Bidirectionally degrades single-stranded DNA into large acid-insoluble oligonucleotides, which are then degraded further into small acid-soluble oligonucleotides. This Shouchella clausii (strain KSM-K16) (Alkalihalobacillus clausii) protein is Exodeoxyribonuclease 7 small subunit.